Reading from the N-terminus, the 289-residue chain is D-alanine aminotransferase (289 aa).

Tyr-31 is a binding site for substrate. Arg-50 contributes to the pyridoxal 5'-phosphate binding site. Substrate contacts are provided by Arg-99 and His-101. Lys-147 bears the N6-(pyridoxal phosphate)lysine mark. A pyridoxal 5'-phosphate-binding site is contributed by Glu-179.

Belongs to the class-IV pyridoxal-phosphate-dependent aminotransferase family. Homodimer. Pyridoxal 5'-phosphate serves as cofactor.

The catalysed reaction is D-alanine + 2-oxoglutarate = D-glutamate + pyruvate. In terms of biological role, acts on the D-isomers of alanine, leucine, aspartate, glutamate, aminobutyrate, norvaline and asparagine. The enzyme transfers an amino group from a substrate D-amino acid to the pyridoxal phosphate cofactor to form pyridoxamine and an alpha-keto acid in the first half-reaction. The second half-reaction is the reverse of the first, transferring the amino group from the pyridoxamine to a second alpha-keto acid to form the product D-amino acid via a ping-pong mechanism. This is an important process in the formation of D-alanine and D-glutamate, which are essential bacterial cell wall components. This Listeria monocytogenes serotype 1/2a (strain 10403S) protein is D-alanine aminotransferase (dat).